A 168-amino-acid chain; its full sequence is G/U mismatch-specific DNA glycosylase (168 aa).

Belongs to the uracil-DNA glycosylase (UDG) superfamily. TDG/mug family. In terms of assembly, binds DNA as a monomer.

The protein localises to the cytoplasm. It carries out the reaction Specifically hydrolyzes mismatched double-stranded DNA and polynucleotides, releasing free uracil.. Functionally, excises ethenocytosine and uracil, which can arise by alkylation or deamination of cytosine, respectively, from the corresponding mispairs with guanine in ds-DNA. It is capable of hydrolyzing the carbon-nitrogen bond between the sugar-phosphate backbone of the DNA and the mispaired base. The complementary strand guanine functions in substrate recognition. Required for DNA damage lesion repair in stationary-phase cells. The chain is G/U mismatch-specific DNA glycosylase from Citrobacter koseri (strain ATCC BAA-895 / CDC 4225-83 / SGSC4696).